Reading from the N-terminus, the 257-residue chain is MSISIKNLILDAWNFFVNQIINIIFFSTISAIISSLINYIFLPNRDELFTLANLISDFNGSINNINYLFQKMSIEQKYILFKLSLSNHLSSLVGNAFLFSNIITMINTICDKKRFFNIFNNIILSSSLIPKFLTLIFLISFLTQCGMALMLIPGIIVLIFLSFSPILITKKNISITDSIKISVNITFKNIKTVAPIIFLWLLIKLIILVISSQISINGFLSSVKIFFYLINNIITVYIIIYMYRLYLLSKIKKNKYL.

6 consecutive transmembrane segments (helical) span residues 23–43, 89–109, 122–142, 148–168, 190–210, and 223–243; these read IIFF…IFLP, LSSL…INTI, IILS…ISFL, ALML…PILI, IKTV…ILVI, and VKIF…IYMY.

This sequence belongs to the UPF0259 family.

The protein localises to the cell membrane. This Wigglesworthia glossinidia brevipalpis protein is UPF0259 membrane protein WIGBR3650.